We begin with the raw amino-acid sequence, 156 residues long: Small ribosomal subunit protein uS7 (156 aa).

It belongs to the universal ribosomal protein uS7 family. In terms of assembly, part of the 30S ribosomal subunit. Contacts proteins S9 and S11.

In terms of biological role, one of the primary rRNA binding proteins, it binds directly to 16S rRNA where it nucleates assembly of the head domain of the 30S subunit. Is located at the subunit interface close to the decoding center, probably blocks exit of the E-site tRNA. The polypeptide is Small ribosomal subunit protein uS7 (Bordetella petrii (strain ATCC BAA-461 / DSM 12804 / CCUG 43448)).